Consider the following 264-residue polypeptide: tRNA pseudouridine synthase A (264 aa).

The Nucleophile role is filled by D54. Y113 serves as a coordination point for substrate.

The protein belongs to the tRNA pseudouridine synthase TruA family. Homodimer.

It carries out the reaction uridine(38/39/40) in tRNA = pseudouridine(38/39/40) in tRNA. Formation of pseudouridine at positions 38, 39 and 40 in the anticodon stem and loop of transfer RNAs. This is tRNA pseudouridine synthase A from Leptospira biflexa serovar Patoc (strain Patoc 1 / Ames).